A 158-amino-acid polypeptide reads, in one-letter code: Dysbindin domain-containing protein 1 (158 aa).

The interval 1 to 38 is disordered; sequence MEPSEGASPGGLVKEVDMPQAALSAPVPVTGTSGQSPM. 2 positions are modified to phosphoserine: S95 and S119. The disordered stretch occupies residues 96–158; that stretch reads DDENVASDSH…ILTVERPKED (63 aa). Over residues 125–141 the composition is skewed to basic and acidic residues; sequence TRAEQNREKQPFGDPER.

It belongs to the dysbindin family.

The protein is Dysbindin domain-containing protein 1 (DBNDD1) of Bos taurus (Bovine).